The chain runs to 457 residues: Flavohemoprotein-1 (457 aa).

In terms of domain architecture, Globin spans 2–157; that stretch reads ALSEDTIKAV…LADLLIKREE (156 aa). A heme b-binding site is contributed by His-106. Residues Tyr-116 and Glu-156 each act as charge relay system in the active site. The interval 168-456 is reductase; it reads GGWRQTRTFR…FEMFGPFKAS (289 aa). Residues 171 to 278 form the FAD-binding FR-type domain; that stretch reads RQTRTFRVEE…APPYGDFFLR (108 aa). Residues Tyr-210 and 227 to 230 each bind FAD; that span reads RQYS. 320-325 contacts NADP(+); it reads GIGQTP. An FAD-binding site is contributed by 449–452; the sequence is MFGP.

This sequence belongs to the globin family. Two-domain flavohemoproteins subfamily. The protein in the C-terminal section; belongs to the flavoprotein pyridine nucleotide cytochrome reductase family. Monomer. It depends on heme b as a cofactor. FAD serves as cofactor.

The enzyme catalyses 2 nitric oxide + NADPH + 2 O2 = 2 nitrate + NADP(+) + H(+). It carries out the reaction 2 nitric oxide + NADH + 2 O2 = 2 nitrate + NAD(+) + H(+). Flavohemoprotein involved in nitric oxide (NO) detoxification in an aerobic process, termed nitric oxide dioxygenase (NOD) reaction that utilizes O(2) and NAD(P)H to convert NO to nitrate, which protects the protozoan parasite from various noxious nitrogen compounds. Therefore, plays a central role in the inducible response to nitrosative stress. May also be involved in O(2) detoxification. The chain is Flavohemoprotein-1 (hmpA-1) from Giardia intestinalis (strain P15) (Giardia lamblia).